The sequence spans 420 residues: FLYWCH transcription factor 3 (420 aa).

Low complexity predominate over residues S87–S104. Disordered stretches follow at residues S87–E107 and K119–R138. Polar residues predominate over residues A123–P134. An FLYWCH-type zinc finger spans residues I140–H195.

Probable transcription factor. May bind to the promoters of target genes, including micro-RNA genes, in order to repress expression, and acting redundantly with flh-2. The polypeptide is FLYWCH transcription factor 3 (Caenorhabditis elegans).